Here is a 144-residue protein sequence, read N- to C-terminus: Transcriptional regulator SlyA (144 aa).

One can recognise an HTH marR-type domain in the interval 2–135 (ESPLGSDLAR…LSNMIAKLEK (134 aa)). Residues 49 to 72 (QIQLAKAIGIEQPSLVRTLDQLEE) constitute a DNA-binding region (H-T-H motif).

It belongs to the SlyA family. In terms of assembly, homodimer.

Its function is as follows. Transcription regulator that can specifically activate or repress expression of target genes. The chain is Transcriptional regulator SlyA from Sodalis glossinidius (strain morsitans).